We begin with the raw amino-acid sequence, 3084 residues long: Highly reducing polyketide synthase sdnO (3084 aa).

The 427-residue stretch at 4–430 folds into the Ketosynthase family 3 (KS3) domain; the sequence is PIPLAVVGIA…GTNAHAVLEK (427 aa). Catalysis depends on for beta-ketoacyl synthase activity residues Cys-178, His-313, and His-353. Residues 541–841 form a malonyl-CoA:ACP transacylase (MAT) domain region; it reads FIFTGQGAQW…LAGPLRQSVA (301 aa). Ser-632 acts as the For malonyltransferase activity in catalysis. The segment at 931–1071 is N-terminal hotdog fold; sequence HDLLGLRMTD…GSVLIDLVSS (141 aa). The interval 931-1243 is dehydratase (DH) domain; sequence HDLLGLRMTD…RSAEADMLVF (313 aa). In terms of domain architecture, PKS/mFAS DH spans 931-1275; the sequence is HDLLGLRMTD…LRSLAALDGA (345 aa). The Proton acceptor; for dehydratase activity role is filled by His-963. A C-terminal hotdog fold region spans residues 1099–1275; that stretch reads LQPGEDIPPS…LRSLAALDGA (177 aa). Asp-1177 serves as the catalytic Proton donor; for dehydratase activity. An enoylreductase (ER) domain region spans residues 1733–2045; sequence GTAHAATFVE…RHENMTKYVV (313 aa). Positions 2069-2252 are catalytic ketoreductase (KRc) domain; it reads ATYVVAGGLG…YMALNIGLIE (184 aa). The Carrier domain maps to 2363–2440; it reads DIEAFAARAI…ALARKVTLRS (78 aa). The residue at position 2400 (Ser-2400) is an O-(pantetheine 4'-phosphoryl)serine. The segment at 2445–2501 is disordered; sequence GGAGGDASSTGNSESMARTPSDSSTVPTSIPATPSRSPSREPPAKETLTKSQQHLPI. The segment covering 2456 to 2481 has biased composition (polar residues); that stretch reads NSESMARTPSDSSTVPTSIPATPSRS. A compositionally biased stretch (basic and acidic residues) spans 2482-2492; that stretch reads PSREPPAKETL. Residues 2864-3084 form a choline/carnitine acyltransferase domain region; the sequence is HFYSQLNRAF…LGVVRRVVEG (221 aa).

It participates in antibiotic biosynthesis. In terms of biological role, highly reducing polyketide synthase; part of the gene cluster that mediates the biosynthesis of sordarin and hypoxysordarin, glycoside antibiotics with a unique tetracyclic diterpene aglycone structure. First, the geranylgeranyl diphosphate synthase sdnC constructs GGDP from farnesyl diphosphate and isopentenyl diphosphate. The diterpene cyclase sdnA then catalyzes the cyclization of GGDP to afford cycloaraneosene. Cycloaraneosene is then hydroxylated four times by the putative cytochrome P450 monooxygenases sdnB, sdnE, sdnF and sdnH to give a hydroxylated cycloaraneosene derivative such as cycloaraneosene-8,9,13,19-tetraol. Although the order of the hydroxylations is unclear, at least C8, C9 and C13 of the cycloaraneosene skeleton are hydroxylated before the sordaricin formation. Dehydration of the 13-hydroxy group of the hydroxylated cycloaraneosene derivative might be catalyzed by an unassigned hypothetical protein such as sdnG and sdnP to construct the cyclopentadiene moiety. The FAD-dependent oxidoreductase sdnN is proposed to catalyze the oxidation at C9 of the hydroxylated cycloaraneosene derivative and also catalyze the Baeyer-Villiger oxidation to give the lactone intermediate. The presumed lactone intermediate would be hydrolyzed to give an acrolein moiety and a carboxylate moiety. Then, [4+2]cycloaddition would occur between the acrolein moiety and the cyclopentadiene moiety to give sordaricin. SdnN might also be involved in the [4+2]cycloaddition after the hypothesized oxidation to accommodate the oxidized product and prompt the [4+2]cycloaddition. GDP-6-deoxy-D-altrose may be biosynthesized from GDP-D-mannose by the putative GDP-mannose-4,6-dehydratase sdnI and the short-chain dehydrogenase sdnK. The glycosyltransferase sdnJ catalyzes the attachment of 6-deoxy-D-altrose onto the 19-hydroxy group of sordaricin to give 4'-O-demethylsordarin. The methyltransferase sdnD would complete the biosynthesis of sordarin. Sordarin can be further modified into hypoxysordarin. The unique acyl chain at the 3'-hydroxy group of hypoxysordarin would be constructed by an iterative type I PKS sdnO and the trans-acting polyketide methyltransferase sdnL. SdnL would be responsible for the introduction of an alpha-methyl group of the polyketide chain. Alternatively, the putative beta-lactamase-like sdnR might be responsible for the cleavage and transfer of the polyketide chain from the PKS sdnO to sordarin. Two putative cytochrome P450 monooxygenases, sdnQ and sdnT, might catalyze the epoxidations of the polyketide chain to complete the biosynthesis of hypoxysordarin. Transcriptional regulators sdnM and sdnS are presumably encoded for the transcriptional regulation of the expression of the sdn gene cluster. The polypeptide is Highly reducing polyketide synthase sdnO (Sordaria araneosa (Pleurage araneosa)).